A 428-amino-acid polypeptide reads, in one-letter code: uncharacterized protein (428 aa).

Disordered regions lie at residues methionine 1 to threonine 25, aspartate 157 to valine 219, and aspartate 247 to proline 271. Residues glycine 12–proline 22 show a composition bias toward polar residues. The span at aspartate 157–lysine 171 shows a compositional bias: basic and acidic residues. Positions serine 172 to glycine 186 are enriched in low complexity. Residues glycine 206–glutamate 217 are compositionally biased toward polar residues.

Belongs to the adhesin P1 family.

This is an uncharacterized protein from Mycoplasma pneumoniae (strain ATCC 29342 / M129 / Subtype 1) (Mycoplasmoides pneumoniae).